The sequence spans 375 residues: Probable aminomethyltransferase (375 aa).

This sequence belongs to the GcvT family. As to quaternary structure, the glycine cleavage system is composed of four proteins: P, T, L and H.

The catalysed reaction is N(6)-[(R)-S(8)-aminomethyldihydrolipoyl]-L-lysyl-[protein] + (6S)-5,6,7,8-tetrahydrofolate = N(6)-[(R)-dihydrolipoyl]-L-lysyl-[protein] + (6R)-5,10-methylene-5,6,7,8-tetrahydrofolate + NH4(+). In terms of biological role, the glycine cleavage system catalyzes the degradation of glycine. This is Probable aminomethyltransferase from Aeropyrum pernix (strain ATCC 700893 / DSM 11879 / JCM 9820 / NBRC 100138 / K1).